The chain runs to 367 residues: Probable butyrate kinase (367 aa).

Belongs to the acetokinase family.

It is found in the cytoplasm. The catalysed reaction is butanoate + ATP = butanoyl phosphate + ADP. In Bacillus cereus (strain B4264), this protein is Probable butyrate kinase.